The chain runs to 247 residues: tRNA uridine(34) hydroxylase (247 aa).

The region spanning 124–218 is the Rhodanese domain; sequence TKQNVIVIDT…YLEDTHNKNN (95 aa). Catalysis depends on Cys-178, which acts as the Cysteine persulfide intermediate.

The protein belongs to the TrhO family.

It catalyses the reaction uridine(34) in tRNA + AH2 + O2 = 5-hydroxyuridine(34) in tRNA + A + H2O. Functionally, catalyzes oxygen-dependent 5-hydroxyuridine (ho5U) modification at position 34 in tRNAs. This chain is tRNA uridine(34) hydroxylase, found in Rickettsia typhi (strain ATCC VR-144 / Wilmington).